Here is a 130-residue protein sequence, read N- to C-terminus: Astrocytic phosphoprotein PEA-15 (130 aa).

A DED domain is found at 3–81; it reads EYGTLLQDLT…RPDLLTMVVD (79 aa). Residues S61 and S90 each carry the phosphoserine modification. The interval 98–107 is microtubule-binding; the sequence is KLTRIPSAKK. Residue S104 is modified to Phosphoserine; by PKC. At S116 the chain carries Phosphoserine; by CaMK2. Residues 122-129 are microtubule-binding; that stretch reads KLAPPPKK.

In terms of assembly, binds RPS6KA3, MAPK3 and MAPK1. Interacts with CASP8 and FADD. Transient interaction with PLD1 and PLD2. Phosphorylated by protein kinase C and calcium-calmodulin-dependent protein kinase. These phosphorylation events are modulated by neurotransmitters or hormones. In terms of tissue distribution, predominantly expressed in the brain. Low levels in some peripheral organs.

It is found in the cytoplasm. In terms of biological role, blocks Ras-mediated inhibition of integrin activation and modulates the ERK MAP kinase cascade. Inhibits RPS6KA3 activities by retaining it in the cytoplasm. Inhibits both TNFRSF6- and TNFRSF1A-mediated CASP8 activity and apoptosis. Regulates glucose transport by controlling both the content of SLC2A1 glucose transporters on the plasma membrane and the insulin-dependent trafficking of SLC2A4 from the cell interior to the surface. This chain is Astrocytic phosphoprotein PEA-15 (Pea15), found in Mus musculus (Mouse).